We begin with the raw amino-acid sequence, 229 residues long: Flagellar calcium-binding protein TB-1.7G (229 aa).

The disordered stretch occupies residues 1 to 25 (GSKNASNPKDGAASKGGKDGKTTAD). Positions 16–25 (GGKDGKTTAD) are enriched in basic and acidic residues. 4 EF-hand domains span residues 44 to 79 (ESKS…ILKL), 80 to 115 (DEFT…LVEF), 126 to 161 (YDIF…LKEW), and 163 to 198 (VDIT…KKLQ). Ca(2+)-binding residues include aspartate 57, asparagine 59, threonine 61, lysine 63, and glutamate 68. The Ca(2+) site is built by aspartate 139, aspartate 141, serine 143, glutamate 150, aspartate 176, asparagine 178, serine 180, and glutamate 187. The disordered stretch occupies residues 202–229 (DPDDEENGANEGDGANAGDGVPAAEGSA). Low complexity predominate over residues 210 to 221 (ANEGDGANAGDG).

The protein belongs to the calflagin family.

The protein resides in the cell projection. It localises to the cilium. Its subcellular location is the flagellum. May contribute to the rapid motility of the trypanosomes, playing a role either in flagellar structure or in calcium metabolism. Could alternate between a GDP-bound inactive form to a calcium/GTP-bound active form. The chain is Flagellar calcium-binding protein TB-1.7G from Trypanosoma brucei brucei.